The primary structure comprises 156 residues: Small ribosomal subunit protein uS7 (156 aa).

This sequence belongs to the universal ribosomal protein uS7 family. In terms of assembly, part of the 30S ribosomal subunit. Contacts proteins S9 and S11.

One of the primary rRNA binding proteins, it binds directly to 16S rRNA where it nucleates assembly of the head domain of the 30S subunit. Is located at the subunit interface close to the decoding center, probably blocks exit of the E-site tRNA. The sequence is that of Small ribosomal subunit protein uS7 from Maricaulis maris (strain MCS10) (Caulobacter maris).